A 158-amino-acid polypeptide reads, in one-letter code: Probable flavodoxin 1 (158 aa).

Residues 4–144 form the Flavodoxin-like domain; the sequence is ALITYASMSG…SCRAFARGFL (141 aa).

This sequence belongs to the flavodoxin family. Requires FMN as cofactor.

Functionally, low-potential electron donor to a number of redox enzymes. The polypeptide is Probable flavodoxin 1 (ykuN) (Bacillus subtilis (strain 168)).